A 382-amino-acid chain; its full sequence is Mannitol-1-phosphate 5-dehydrogenase (382 aa).

An NAD(+)-binding site is contributed by A4–G15.

Belongs to the mannitol dehydrogenase family.

The enzyme catalyses D-mannitol 1-phosphate + NAD(+) = beta-D-fructose 6-phosphate + NADH + H(+). The chain is Mannitol-1-phosphate 5-dehydrogenase from Vibrio vulnificus (strain CMCP6).